Here is a 259-residue protein sequence, read N- to C-terminus: Trans-4-hydroxycyclohexanecarboxylate dehydrogenase (259 aa).

Arg20, Met22, Asp41, Asp73, Val74, Asn100, Tyr164, Lys168, Val197, Thr199, and Thr202 together coordinate NAD(+). Residue Tyr164 is the Proton acceptor of the active site.

This sequence belongs to the short-chain dehydrogenases/reductases (SDR) family. As to quaternary structure, homodimer. Homotetramer.

The catalysed reaction is trans-4-hydroxycyclohexane-1-carboxylate + NAD(+) = 4-oxocyclohexane-1-carboxylate + NADH + H(+). Strongly inhibited by N-bromosuccinimide. Not inhibited by sulfhydryl reagents, such as iodoacetic acid, iodoacetamide, N-ethylmaleimide and p-hydroxymercuribenzoic acid. In terms of biological role, dehydrogenase involved in a cyclohexanecarboxylate (CHCA) degradation pathway. Catalyzes the NAD(+)-dependent dehydrogenation of trans-4-hydroxycyclohexanecarboxylate (trans-4-hydroxyCHCA) to form 4-oxocyclohexanecarboxylate (4-oxoCHCA). Is highly specific for the trans-4-hydroxy derivative and shows only weak activity with cis-4-hydroxyCHCA. Can also catalyze the reverse reaction (4-oxoCHCA reduction) with a higher catalytic efficiency. In the reverse reaction, is highly specific for 4-oxoCHCA and cannot use either the 2-oxo or the 3-oxo homolog as substrate. Cannot use NADP(+). In Sinomonas cyclohexanicum (Corynebacterium cyclohexanicum), this protein is Trans-4-hydroxycyclohexanecarboxylate dehydrogenase.